The chain runs to 907 residues: Glutamate receptor 1 (907 aa).

Residues 1–18 (MPYIFAFFCTGFLGAVVG) form the signal peptide. At 19 to 536 (ANFPNNIQIG…GVFSFLDPLA (518 aa)) the chain is on the extracellular side. Residues Asn-63, Asn-249, Asn-257, Asn-363, Asn-401, and Asn-406 are each glycosylated (N-linked (GlcNAc...) asparagine). Cys-75 and Cys-323 are disulfide-bonded. Positions 492, 494, and 499 each coordinate L-glutamate. A helical transmembrane segment spans residues 537-557 (YEIWMCIVFAYIGVSVVLFLV). Topologically, residues 558 to 584 (SRFSPYEWHSEEFEEGRDQTTSDQSNE) are cytoplasmic. Residues 585 to 600 (FGIFNSLWFSLGAFMQ) constitute an intramembrane region (helical; Pore-forming). Residues 601–603 (QGC) lie within the membrane without spanning it. The S-palmitoyl cysteine moiety is linked to residue Cys-603. The Cytoplasmic portion of the chain corresponds to 604–609 (DISPRS). A helical membrane pass occupies residues 610–630 (LSGRIVGGVWWFFTLIIISSY). At 631–805 (TANLAAFLTV…DKTSALSLSN (175 aa)) the chain is on the extracellular side. Position 645 is a phosphoserine (Ser-645). L-glutamate-binding residues include Ser-668 and Thr-669. Phosphoserine; by PKC is present on Ser-710. Glu-719 is a binding site for L-glutamate. Cys-732 and Cys-787 are disulfide-bonded. The chain crosses the membrane as a helical span at residues 806 to 826 (VAGVFYILIGGLGLAMLVALI). Over 827-907 (EFCYKSRSES…SGMPLGATGL (81 aa)) the chain is Cytoplasmic. Cys-829 is lipidated: S-palmitoyl cysteine. Phosphoserine; by PKC, PKA and CAMK2 is present on Ser-849. Residues 857 to 881 (STLPRNSGAGASGGGGSGENGRVVS) form a disordered region. Ser-863 is subject to Phosphoserine; by PKC, PKA and PKG/PRKG2. The span at 866 to 875 (GASGGGGSGE) shows a compositional bias: gly residues. A PDZ-binding motif is present at residues 904–907 (ATGL).

The protein belongs to the glutamate-gated ion channel (TC 1.A.10.1) family. GRIA1 subfamily. In terms of assembly, homotetramer or heterotetramer of pore-forming glutamate receptor subunits; heteromeric assembly can be the result of both receptor subtype and flip-flop forms and according the composition, one partner can be dominant with respect to the fast desensitizing current component, whereas the other can determine the steady-state component. Tetramers may be formed by the dimerization of dimers. Found in a complex with GRIA2, GRIA3, GRIA4, CNIH2, CNIH3, CACNG2, CACNG3, CACNG4, CACNG5, CACNG7 and CACNG8. Interacts with HIP1 and RASGRF2. Interacts with SYNDIG1 and GRIA2. Interacts with DLG1 (via C-terminus). Interacts with LRFN1. Interacts with PRKG2. Interacts with CNIH2 and CACNG2. Interacts with CACNG5; this interaction modulates the gating. Interacts (via C-terminus) with PDLIM4 (via LIM domain); this interaction as well as the interaction of PDLIM4 with alpha-actinin is required for their colocalization in early endosomes. Interacts with SNX27 (via PDZ domain); the interaction is required for recycling to the plasma membrane when endocytosed and prevent degradation in lysosomes. Interacts (via PDZ-binding motif) with SHANK3 (via PDZ domain). Interacts with CACNG3; associates GRIA1 with the adapter protein complex 4 (AP-4) to target GRIA1 to the somatodendritic compartment of neurons. Interacts with CACNG2; this interaction mediates traffick to the plasma membrane and modulation of desensitization. Interaction with CNIH2 and CNIH3; this interaction promotes expression at the plasma membrane and extensively modulates their gating properties by slowing deactivation and desensitization kinetics. Found in a complex with GRIA2, GRIA3, GRIA4, DLG4, CACNG8 and CNIH2. Phosphorylated at Ser-645. Phosphorylated at Ser-710 by PKC. Phosphorylated at Ser-849 by PKC, PKA and CAMK2. Phosphorylated at Ser-863 by PKC, PKA and PRKG2. Phosphorylation of Ser-863 is reduced by induction of long-term depression and increased by induction of long-term potentiation. Post-translationally, palmitoylated. Depalmitoylated by CPT1C and upon L-glutamate stimulation. ZDHHC3/GODZ specifically palmitoylates Cys-603, which leads to Golgi retention and decreased cell surface expression. In contrast, Cys-829 palmitoylation does not affect cell surface expression but regulates stimulation-dependent endocytosis. In terms of tissue distribution, detected in cerebellum (at protein level).

The protein localises to the cell membrane. It is found in the endoplasmic reticulum membrane. The protein resides in the postsynaptic cell membrane. It localises to the postsynaptic density membrane. Its subcellular location is the cell projection. The protein localises to the dendrite. It is found in the dendritic spine. The protein resides in the early endosome membrane. It localises to the recycling endosome membrane. Its subcellular location is the presynapse. The protein localises to the synapse. It carries out the reaction Ca(2+)(in) = Ca(2+)(out). The enzyme catalyses Na(+)(in) = Na(+)(out). The catalysed reaction is Mg(2+)(in) = Mg(2+)(out). It catalyses the reaction Li(+)(in) = Li(+)(out). It carries out the reaction K(+)(in) = K(+)(out). The enzyme catalyses Sr(2+)(in) = Sr(2+)(out). Its activity is regulated as follows. Glutamate-gated receptor activity inhibited by DNQX (6,7-dinitroquinoxaline-2,3-dione). Ionotropic glutamate receptor that functions as a ligand-gated cation channel, gated by L-glutamate and glutamatergic agonists such as alpha-amino-3-hydroxy-5-methyl-4-isoxazolepropionic acid (AMPA), quisqualic acid, and kainic acid. L-glutamate acts as an excitatory neurotransmitter at many synapses in the central nervous system. Binding of the excitatory neurotransmitter L-glutamate induces a conformation change, leading to the opening of the cation channel, and thereby converts the chemical signal to an electrical impulse upon entry of monovalent and divalent cations such as sodium and calcium. The receptor then desensitizes rapidly and enters in a transient inactive state, characterized by the presence of bound agonist. In the presence of CACNG2 or CACNG4 or CACNG7 or CACNG8, shows resensitization which is characterized by a delayed accumulation of current flux upon continued application of L-glutamate. Resensitization is blocked by CNIH2 through interaction with CACNG8 in the CACNG8-containing AMPA receptors complex. Calcium (Ca(2+)) permeability depends on subunits composition and, heteromeric channels containing edited GRIA2 subunit are calcium-impermeable. Also permeable to other divalents cations such as strontium(2+) and magnesium(2+) and monovalent cations such as potassium(1+) and lithium(1+). This is Glutamate receptor 1 from Rattus norvegicus (Rat).